We begin with the raw amino-acid sequence, 160 residues long: Putative 4-hydroxy-4-methyl-2-oxoglutarate aldolase (160 aa).

Substrate is bound by residues 76-79 and arginine 98; that span reads GDMI. Position 99 (aspartate 99) interacts with a divalent metal cation.

This sequence belongs to the class II aldolase/RraA-like family. In terms of assembly, homotrimer. Requires a divalent metal cation as cofactor.

It carries out the reaction 4-hydroxy-4-methyl-2-oxoglutarate = 2 pyruvate. The catalysed reaction is oxaloacetate + H(+) = pyruvate + CO2. Functionally, catalyzes the aldol cleavage of 4-hydroxy-4-methyl-2-oxoglutarate (HMG) into 2 molecules of pyruvate. Also contains a secondary oxaloacetate (OAA) decarboxylase activity due to the common pyruvate enolate transition state formed following C-C bond cleavage in the retro-aldol and decarboxylation reactions. The sequence is that of Putative 4-hydroxy-4-methyl-2-oxoglutarate aldolase from Alcanivorax borkumensis (strain ATCC 700651 / DSM 11573 / NCIMB 13689 / SK2).